Consider the following 579-residue polypeptide: Alpha-longipinene synthase (579 aa).

Mg(2+) contacts are provided by Asp-332, Asp-336, Asp-476, and Asn-484. Positions 332 to 336 (DDLYD) match the DDXXD motif motif.

It belongs to the terpene synthase family. Tpsd subfamily. Mg(2+) serves as cofactor. Mn(2+) is required as a cofactor.

It catalyses the reaction (2E,6E)-farnesyl diphosphate = alpha-longipinene + diphosphate. Its pathway is sesquiterpene biosynthesis. The protein operates within terpene metabolism; oleoresin biosynthesis. Its function is as follows. Terpene synthase (TPS) involved in the biosynthesis of sesquiterpene natural products included in conifer oleoresin secretions and volatile emissions; these compounds contribute to biotic and abiotic stress defense against herbivores and pathogens. Catalyzes the conversion of (2E,6E)-farnesyl diphosphate (FPP) to alpha-longipinene. In Picea sitchensis (Sitka spruce), this protein is Alpha-longipinene synthase.